Consider the following 317-residue polypeptide: 4-hydroxy-3-methylbut-2-enyl diphosphate reductase (317 aa).

Cys-12 contributes to the [4Fe-4S] cluster binding site. 2 residues coordinate (2E)-4-hydroxy-3-methylbut-2-enyl diphosphate: His-41 and His-74. His-41 and His-74 together coordinate dimethylallyl diphosphate. The isopentenyl diphosphate site is built by His-41 and His-74. Cys-97 contributes to the [4Fe-4S] cluster binding site. His-125 serves as a coordination point for (2E)-4-hydroxy-3-methylbut-2-enyl diphosphate. Position 125 (His-125) interacts with dimethylallyl diphosphate. An isopentenyl diphosphate-binding site is contributed by His-125. The Proton donor role is filled by Glu-127. Thr-168 serves as a coordination point for (2E)-4-hydroxy-3-methylbut-2-enyl diphosphate. Cys-198 serves as a coordination point for [4Fe-4S] cluster. (2E)-4-hydroxy-3-methylbut-2-enyl diphosphate is bound by residues Ser-226, Ser-227, Asn-228, and Ser-270. Positions 226, 227, 228, and 270 each coordinate dimethylallyl diphosphate. Isopentenyl diphosphate contacts are provided by Ser-226, Ser-227, Asn-228, and Ser-270.

This sequence belongs to the IspH family. Homodimer. It depends on [4Fe-4S] cluster as a cofactor.

The enzyme catalyses isopentenyl diphosphate + 2 oxidized [2Fe-2S]-[ferredoxin] + H2O = (2E)-4-hydroxy-3-methylbut-2-enyl diphosphate + 2 reduced [2Fe-2S]-[ferredoxin] + 2 H(+). It catalyses the reaction dimethylallyl diphosphate + 2 oxidized [2Fe-2S]-[ferredoxin] + H2O = (2E)-4-hydroxy-3-methylbut-2-enyl diphosphate + 2 reduced [2Fe-2S]-[ferredoxin] + 2 H(+). The protein operates within isoprenoid biosynthesis; dimethylallyl diphosphate biosynthesis; dimethylallyl diphosphate from (2E)-4-hydroxy-3-methylbutenyl diphosphate: step 1/1. It functions in the pathway isoprenoid biosynthesis; isopentenyl diphosphate biosynthesis via DXP pathway; isopentenyl diphosphate from 1-deoxy-D-xylulose 5-phosphate: step 6/6. Its function is as follows. Catalyzes the conversion of 1-hydroxy-2-methyl-2-(E)-butenyl 4-diphosphate (HMBPP) into a mixture of isopentenyl diphosphate (IPP) and dimethylallyl diphosphate (DMAPP). Acts in the terminal step of the DOXP/MEP pathway for isoprenoid precursor biosynthesis. In Proteus mirabilis (strain HI4320), this protein is 4-hydroxy-3-methylbut-2-enyl diphosphate reductase.